The following is a 111-amino-acid chain: Ig kappa chain V-III region PC 7769 (111 aa).

The segment at 1–23 is framework-1; sequence DIVLTQSPASLAVSLGQRATISC. C23 and C92 are disulfide-bonded. Residues 24–38 form a complementarity-determining-1 region; the sequence is KASQSVDYDGDSYMN. The interval 39-53 is framework-2; it reads WYQQKPGQPPKVLIF. The tract at residues 54-60 is complementarity-determining-2; that stretch reads AASNLES. The segment at 61–92 is framework-3; the sequence is GIPARFSGSGSGTDFTLNIHPVEEEDAATYYC. Residues 93–101 form a complementarity-determining-3 region; sequence QQSNEDPWT. Positions 102-111 are framework-4; that stretch reads FGSGTKLEIK.

The chain is Ig kappa chain V-III region PC 7769 from Mus musculus (Mouse).